The chain runs to 208 residues: Glycerol-3-phosphate acyltransferase (208 aa).

5 helical membrane-spanning segments follow: residues 3–23 (IIIM…VIIG), 55–75 (IVMV…TLLF), 81–101 (YTLL…YIGF), 113–133 (ILLA…LLLV), and 155–175 (IFYY…LFIF).

Belongs to the PlsY family. As to quaternary structure, probably interacts with PlsX.

Its subcellular location is the cell membrane. The catalysed reaction is an acyl phosphate + sn-glycerol 3-phosphate = a 1-acyl-sn-glycero-3-phosphate + phosphate. The protein operates within lipid metabolism; phospholipid metabolism. In terms of biological role, catalyzes the transfer of an acyl group from acyl-phosphate (acyl-PO(4)) to glycerol-3-phosphate (G3P) to form lysophosphatidic acid (LPA). This enzyme utilizes acyl-phosphate as fatty acyl donor, but not acyl-CoA or acyl-ACP. This is Glycerol-3-phosphate acyltransferase from Lactiplantibacillus plantarum (strain ATCC BAA-793 / NCIMB 8826 / WCFS1) (Lactobacillus plantarum).